The following is a 301-amino-acid chain: D-alanine--D-alanine ligase A (301 aa).

Residues 96–290 form the ATP-grasp domain; that stretch reads KKILRYEGVE…YSKLLDMIIE (195 aa). Residue 123 to 178 participates in ATP binding; that stretch reads LDKLGFPLVVKPNSGGSSVGVKIVYNKNELISMLETVFEWDSEVVIEKYIKGDEIT. Mg(2+)-binding residues include aspartate 245, glutamate 257, and asparagine 259.

It belongs to the D-alanine--D-alanine ligase family. The cofactor is Mg(2+). Mn(2+) is required as a cofactor.

Its subcellular location is the cytoplasm. The catalysed reaction is 2 D-alanine + ATP = D-alanyl-D-alanine + ADP + phosphate + H(+). Its pathway is cell wall biogenesis; peptidoglycan biosynthesis. In terms of biological role, cell wall formation. The polypeptide is D-alanine--D-alanine ligase A (Bacillus cereus (strain ATCC 14579 / DSM 31 / CCUG 7414 / JCM 2152 / NBRC 15305 / NCIMB 9373 / NCTC 2599 / NRRL B-3711)).